Here is a 255-residue protein sequence, read N- to C-terminus: Alkaline ceramidase (255 aa).

Residues 1–28 lie on the Lumenal side of the membrane; sequence MADGISSFWGPVTSTIECCEMNYAYSSY. A helical membrane pass occupies residues 29 to 49; the sequence is IAEFYNTISNVPGILLALIGL. The Cytoplasmic segment spans residues 50–60; the sequence is VNALRQRFEKR. Residues 61–81 form a helical membrane-spanning segment; that stretch reads FSILHISNMILAIGSMLYHAT. His-79 contributes to the Zn(2+) binding site. Topologically, residues 82–91 are lumenal; the sequence is LQHVQQQSDE. A helical membrane pass occupies residues 92 to 112; it reads TPMVWEILLYMYILYSPDWHY. Topologically, residues 113 to 118 are cytoplasmic; it reads RSTMPT. 2 helical membrane-spanning segments follow: residues 119–139 and 140–160; these read FLFL…FGIG and FKVH…KYYI. The Cytoplasmic portion of the chain corresponds to 161-169; sequence HTEDTAAKR. The helical transmembrane segment at 170–192 threads the bilayer; sequence IAKWYVATILVGSICWFCDRVFC. Residues 193-205 are Lumenal-facing; sequence KTISQWPVNPQGH. His-205 and His-209 together coordinate Zn(2+). Residues 206 to 226 traverse the membrane as a helical segment; it reads ALWHVFMSFNSYCANTFLMFC. Topologically, residues 227 to 255 are cytoplasmic; sequence RAQQRGWNPKVKYFLGVLPYVKIEKPKTQ.

The protein belongs to the alkaline ceramidase family. Zn(2+) is required as a cofactor. As to expression, mostly expressed in roots, shoot meristems and pollen, and, to a lower extent, in mature leaves.

It localises to the endoplasmic reticulum membrane. The protein localises to the golgi apparatus membrane. Functionally, hydrolyzes only phytoceramide into phytosphingosine and free fatty acid. Does not have reverse activity. Affects plant morphogenesis. Required for the formation of wax layer that ensure cuticle permeability. Implicated in abscisic acid (ABA)-mediated stomatal closure. Involved in both biotic and abiotic stresses. Promotes salt resistance and defenses responses toward pathogenic bacteria (e.g. P.syringae) and against the fungal toxin fumonisin B1 (FB1). This Arabidopsis thaliana (Mouse-ear cress) protein is Alkaline ceramidase.